Consider the following 451-residue polypeptide: tRNA modification GTPase MnmE (451 aa).

The (6S)-5-formyl-5,6,7,8-tetrahydrofolate site is built by Arg28, Glu85, and Lys124. Residues 220-377 form the TrmE-type G domain; the sequence is GMNVVLVGQP…LRSELLRVAG (158 aa). Asn230 lines the K(+) pocket. GTP-binding positions include 230–235, 249–255, and 274–277; these read NVGKSS, TDIAGTT, and DTAG. Ser234 lines the Mg(2+) pocket. K(+) is bound by residues Thr249, Ile251, and Thr254. A Mg(2+)-binding site is contributed by Thr255. Lys451 serves as a coordination point for (6S)-5-formyl-5,6,7,8-tetrahydrofolate.

Belongs to the TRAFAC class TrmE-Era-EngA-EngB-Septin-like GTPase superfamily. TrmE GTPase family. As to quaternary structure, homodimer. Heterotetramer of two MnmE and two MnmG subunits. K(+) serves as cofactor.

The protein resides in the cytoplasm. Exhibits a very high intrinsic GTPase hydrolysis rate. Involved in the addition of a carboxymethylaminomethyl (cmnm) group at the wobble position (U34) of certain tRNAs, forming tRNA-cmnm(5)s(2)U34. The protein is tRNA modification GTPase MnmE of Aromatoleum aromaticum (strain DSM 19018 / LMG 30748 / EbN1) (Azoarcus sp. (strain EbN1)).